The primary structure comprises 187 residues: High affinity copper uptake protein 1 (187 aa).

At methionine 1–glutamate 65 the chain is on the extracellular side. Residues histidine 9–histidine 10 carry the Bis-His motif motif. Asparagine 19 carries N-linked (GlcNAc...) asparagine glycosylation. Threonine 30 carries an O-linked (GalNAc...) threonine glycan. The helical transmembrane segment at methionine 66–alanine 86 threads the bilayer. Topologically, residues arginine 87–histidine 129 are cytoplasmic. Threonine 111 carries the post-translational modification Phosphothreonine. The helical transmembrane segment at leucine 130–phenylalanine 150 threads the bilayer. At methionine 151–tyrosine 153 the chain is on the extracellular side. The helical transmembrane segment at asparagine 154 to tryptophan 174 threads the bilayer. Residues lysine 175–histidine 187 lie on the Cytoplasmic side of the membrane. At cysteine 186 the chain carries Cysteine sulfenic acid (-SOH).

The protein belongs to the copper transporter (Ctr) (TC 1.A.56) family. SLC31A subfamily. As to quaternary structure, homotrimer; is stabilized by cisplatin via interactions between cisplatin and the methionine-rich clusters, and could be crucial for the copper(2+) reduction process and copper(1+) stabilization. Heterotrimer between SLC31A1, CCS and SOD1; this heterotrimer is copper(1+)-mediated and its maintenance is regulated through SOD1 activation. Interacts with KDR; this interaction is induced upon VEGFA stimulation leading to SLC31A1 and KDR subsequent co-internalization to early endosomes, thereby activating KDR downstream signaling in endothelial cells. Interacts (via C-terminal domain) with ATOX1 (via dimer form); this interaction improves ATOX1 stability and controls intracellular copper(1+) levels. Interacts with SLC31A2; this interaction stabilizes SLC31A2 and protects its from ubiquitination and degradation. Interacts (via C-terminal domain) with CCS; this interaction is copper(1+)-mediated. Post-translationally, O-Glycosylation at Thr-30 protects from proteolytic cleavage in the N-terminal extracellular domain. In terms of processing, proteolytic cleavage, leading to a truncated form, is facilitated by SLC31A2 and initiated preferentially by CTSL and to a minor extend by CTSB in endolysosomal compartments. A post-CTSL/cathepsin L processing occurs to yield to the fully truncated form. Sulfenylated at Cys-186 after stimulation with VEGFA, which induces SLC31A1-KDR disulfide bond formation and their co-internalization to early endosomes, driving to a sustained VEGFR2 signaling.

It localises to the cell membrane. Its subcellular location is the early endosome membrane. The protein localises to the recycling endosome membrane. It is found in the apical cell membrane. The protein resides in the late endosome membrane. It localises to the basolateral cell membrane. The enzyme catalyses Cu(+)(out) = Cu(+)(in). The catalysed reaction is Ag(+)(out) = Ag(+)(in). Copper uptake is inhibited by cold temperature, silver and zinc ions. Platinum-containing chemotherapeutic agents uptake is inhibited by cold temperature and copper. Uniporter that mediates the transport of copper(1+) from the extracellular space to the cytoplasm, across the plasma membrane. Then, delivers directly copper(1+) to specific chaperone such as ATOX1, via a copper(1+)- mediated transient interaction between the C-terminal domain and a copper(1+) chaperone, thus controlling intracellular copper(1+) levels. May function in copper(1+) import from the apical membrane thus may drive intestinal copper absorption. The copper(1+) transport mechanism is sodium-independent, saturable and of high-affinity. Also mediates the uptake of silver(1+). May function in the influx of the platinum-containing chemotherapeutic agents. The platinum-containing chemotherapeutic agents uptake is saturable. Also participates in the first step of copper(2+) acquisition by cells through a direct transfer of copper(2+) from copper(2+) carriers in blood, such as ALB to the N-terminal domain of SLC31A1, leading to copper(2+) reduction and probably followed by copper(1+) stabilization. In addition, functions as a redox sensor to promote angiogenesis in endothelial cells, in a copper(1+) transport independent manner, by transmitting the VEGF-induced ROS signal through a sulfenylation at Cys-189 leading to a subsequent disulfide bond formation between SLC31A1 and KDR. The SLC31A1-KDR complex is then co-internalized to early endosomes, driving a sustained VEGFR2 signaling. In terms of biological role, mobilizes copper(1+) out of the endosomal compartment, making copper(1+) available for export out of the cells. This is High affinity copper uptake protein 1 from Rattus norvegicus (Rat).